We begin with the raw amino-acid sequence, 85 residues long: Beta-insect depressant toxin Lqh-dprIT3a (85 aa).

An N-terminal signal peptide occupies residues 1 to 21 (MKLLLLLTISASMLIEGLVNA). Positions 22–82 (DGYIRGGDGC…EWDYETNTCG (61 aa)) constitute an LCN-type CS-alpha/beta domain. 4 disulfides stabilise this stretch: cysteine 31–cysteine 81, cysteine 35–cysteine 56, cysteine 42–cysteine 63, and cysteine 46–cysteine 65. A Glycine amide modification is found at glycine 82.

It belongs to the long (4 C-C) scorpion toxin superfamily. Sodium channel inhibitor family. Beta subfamily. As to expression, expressed by the venom gland.

The protein resides in the secreted. Its function is as follows. Depressant insect beta-toxins cause a transient contraction paralysis followed by a slow flaccid paralysis. They bind voltage-independently at site-4 of sodium channels (Nav) and block action potentials, primarily by depolarizing the axonal membrane and suppressing the sodium current. This depressant toxin is active only on insects. It is found in a relatively small amount in the venom, and its activity on insects is 10-fold higher compared to other known depressant toxins. The polypeptide is Beta-insect depressant toxin Lqh-dprIT3a (Leiurus hebraeus (Hebrew deathstalker scorpion)).